Reading from the N-terminus, the 324-residue chain is Glyoxylate/hydroxypyruvate reductase B (324 aa).

Active-site residues include Arg237 and Glu266. Residue His285 is the Proton donor of the active site.

The protein belongs to the D-isomer specific 2-hydroxyacid dehydrogenase family. GhrB subfamily. Homodimer.

The protein resides in the cytoplasm. It carries out the reaction glycolate + NADP(+) = glyoxylate + NADPH + H(+). The enzyme catalyses (R)-glycerate + NAD(+) = 3-hydroxypyruvate + NADH + H(+). The catalysed reaction is (R)-glycerate + NADP(+) = 3-hydroxypyruvate + NADPH + H(+). Functionally, catalyzes the NADPH-dependent reduction of glyoxylate and hydroxypyruvate into glycolate and glycerate, respectively. The chain is Glyoxylate/hydroxypyruvate reductase B from Shigella dysenteriae serotype 1 (strain Sd197).